Here is a 120-residue protein sequence, read N- to C-terminus: Large ribosomal subunit protein uL18 (120 aa).

This sequence belongs to the universal ribosomal protein uL18 family. As to quaternary structure, part of the 50S ribosomal subunit; part of the 5S rRNA/L5/L18/L25 subcomplex. Contacts the 5S and 23S rRNAs.

Its function is as follows. This is one of the proteins that bind and probably mediate the attachment of the 5S RNA into the large ribosomal subunit, where it forms part of the central protuberance. The protein is Large ribosomal subunit protein uL18 of Chloroherpeton thalassium (strain ATCC 35110 / GB-78).